The chain runs to 201 residues: MAWVWALVLLAALGSARAERDCRVSSFRVKENFDKARFSGTWYAMAKKDPEGLFLQDNIVAEFSVDENGQMSATAKGRVRLLNNWDVCADMVGTFTDTEDSAKFKMKYWGVASFLQKGNDDHWIIDTDYDTYAVQYSCRLLNLDGTCADSYSFVFARDPNGLPPDVQKIVRQRQDELCLARQYRLIVHNGYCDGKSEQNIL.

Positions M1–A18 are cleaved as a signal peptide. 3 disulfide bridges follow: C22-C178, C88-C192, and C138-C147. Q116 serves as a coordination point for substrate. R139 is subject to Omega-N-methylarginine.

Belongs to the calycin superfamily. Lipocalin family. As to quaternary structure, interacts with TTR. Interaction with TTR prevents its loss by filtration through the kidney glomeruli. Interacts with STRA6. As to expression, highly expressed in liver. Also expressed in adipose tissue. Expressed by endometrium from days 16-25 and by unattached chorioallantois from days 30-36 during pregnancy.

The protein resides in the secreted. In terms of biological role, retinol-binding protein that mediates retinol transport in blood plasma. Delivers retinol from the liver stores to the peripheral tissues. Transfers the bound all-trans retinol to STRA6, that then facilitates retinol transport across the cell membrane. The sequence is that of Retinol binding protein 4 from Felis catus (Cat).